The following is a 739-amino-acid chain: Phosphoribosylformylglycinamidine synthase subunit PurL (739 aa).

Histidine 52 is a catalytic residue. Residues tyrosine 55 and lysine 94 each contribute to the ATP site. Glutamate 96 contacts Mg(2+). Residues 97-100 (SHNH) and arginine 119 each bind substrate. Histidine 98 functions as the Proton acceptor in the catalytic mechanism. Aspartate 120 is a Mg(2+) binding site. Glutamine 243 is a binding site for substrate. Aspartate 271 lines the Mg(2+) pocket. Substrate is bound at residue 315 to 317 (ESQ). 2 residues coordinate ATP: aspartate 498 and glycine 535. Asparagine 536 contacts Mg(2+). Serine 538 contacts substrate.

The protein belongs to the FGAMS family. As to quaternary structure, monomer. Part of the FGAM synthase complex composed of 1 PurL, 1 PurQ and 2 PurS subunits.

It is found in the cytoplasm. The enzyme catalyses N(2)-formyl-N(1)-(5-phospho-beta-D-ribosyl)glycinamide + L-glutamine + ATP + H2O = 2-formamido-N(1)-(5-O-phospho-beta-D-ribosyl)acetamidine + L-glutamate + ADP + phosphate + H(+). It functions in the pathway purine metabolism; IMP biosynthesis via de novo pathway; 5-amino-1-(5-phospho-D-ribosyl)imidazole from N(2)-formyl-N(1)-(5-phospho-D-ribosyl)glycinamide: step 1/2. In terms of biological role, part of the phosphoribosylformylglycinamidine synthase complex involved in the purines biosynthetic pathway. Catalyzes the ATP-dependent conversion of formylglycinamide ribonucleotide (FGAR) and glutamine to yield formylglycinamidine ribonucleotide (FGAM) and glutamate. The FGAM synthase complex is composed of three subunits. PurQ produces an ammonia molecule by converting glutamine to glutamate. PurL transfers the ammonia molecule to FGAR to form FGAM in an ATP-dependent manner. PurS interacts with PurQ and PurL and is thought to assist in the transfer of the ammonia molecule from PurQ to PurL. In Caulobacter vibrioides (strain ATCC 19089 / CIP 103742 / CB 15) (Caulobacter crescentus), this protein is Phosphoribosylformylglycinamidine synthase subunit PurL.